Here is a 328-residue protein sequence, read N- to C-terminus: AA9 family lytic polysaccharide monooxygenase A (328 aa).

A signal peptide spans 1 to 21 (MPSTKVAALSAVLALASTVAG). His22 contacts Cu(2+). At His22 the chain carries Methylhistidine. 2 disulfide bridges follow: Cys77–Cys199 and Cys118–Cys122. An N-linked (GlcNAc...) asparagine glycan is attached at Asn80. His107 contacts Cu(2+). Residues Asn121 and Asn159 are each glycosylated (N-linked (GlcNAc...) asparagine). Positions 185 and 194 each coordinate O2. Position 196 (Tyr196) interacts with Cu(2+). 2 O-linked (Man...) serine glycosylation sites follow: Ser235 and Ser237. O-linked (Man...) threonine glycosylation is found at Thr238 and Thr245.

Belongs to the polysaccharide monooxygenase AA9 family. It depends on Cu(2+) as a cofactor. In terms of processing, the catalytically essential N-terminal histidine His-22 is post-translationally modified by methylation to prevent protonation of the histidine side chain, and protect the critical active site of the enzyme from oxidative damage.

The protein localises to the secreted. It carries out the reaction [(1-&gt;4)-beta-D-glucosyl]n+m + reduced acceptor + O2 = 4-dehydro-beta-D-glucosyl-[(1-&gt;4)-beta-D-glucosyl]n-1 + [(1-&gt;4)-beta-D-glucosyl]m + acceptor + H2O.. Lytic polysaccharide monooxygenase (LPMO) that depolymerizes crystalline and amorphous polysaccharides via the oxidation of scissile alpha- or beta-(1-4)-glycosidic bonds, yielding C1 and C4 oxidation products. Catalysis by LPMOs requires the reduction of the active-site copper from Cu(II) to Cu(I) by a reducing agent and H(2)O(2) or O(2) as a cosubstrate. Shows activity on cellulosic substrates (Avicel, carboxymethylcellulose) and xylan. This Talaromyces verruculosus (Penicillium verruculosum) protein is AA9 family lytic polysaccharide monooxygenase A.